The primary structure comprises 786 residues: MASQRQPPSSSNAFSFLSKGWREVRDSADADLQLMKDRANSFKNLATSFDRELENFFNSAAPAFSVPAMRSASPPPAEIEFVKKLQPKLSEFRRAYSSPDFSKKVLEKWRPRARIRIDLSAIKNAIVSEEIDEGIVDFERGKRERRLSFWEELKGEGEAQDWEPIRALKTRLKEFEKRSSSVEFFDGFKNSEFLEKVKSSLKSMCKEPRDSKEVPPLDVAELLAYFVKQSGPFLDQLGVRRDVCDKIVESLYSKRKNQLLLPSLSGEESSLLGNGNINDELDLRIASVLQSTGHRNEGGFWTDHAKHDLSDNERHVAIVTTASLPWMTGTAVNPLFRAAYLSQSEKQKVTLLVPWLCKSDQELVYPSNLTFTSPEEQEGYIRNWLEERIGFKADFKISFYPGKFSQARRSIIPAGDTAQFIPSKDADIAILEEPEHLNWYHHGTRWTDKFNHVVGIVHTNYLEYIKREKNGALQAFLVKHINNWVARAYCDKVLRLSAATQDLPKSVVCNVHGVNPKFLKIGESIAAERELGQKGFTKGAYFLGKMVWAKGYKELIDLLAKHKADLDGVKLDVFGNGEDANEVQSAARRFDLNLNFQKGRDHADDSLHRYKVFINPSISDVLCTATAEALAMGKFVVCADHPSNEFFRSFPNCLTYKTPEDFAVKVKEALANEPYPLTPEQRYQLSWEAATQRFMEYSELDKVLNKEKDGAKPSKNNRKIMAKSASMPNLTELVDGGLAFAHYCLTGNEFLRLCTGATPGTRDYDKQHCKDLNLLPPQVENPIYGW.

A chloroplast-targeting transit peptide spans 1-25 (MASQRQPPSSSNAFSFLSKGWREVR).

It belongs to the glycosyltransferase group 1 family. Glycosyltransferase 4 subfamily. High expression in nodules infected cells, but low in nodule inner cortex and root central cylinder.

It localises to the plastid. Its subcellular location is the chloroplast outer membrane. The protein localises to the plastid outer membrane. The enzyme catalyses a 1,2-diacyl-3-O-(beta-D-galactosyl)-sn-glycerol + UDP-alpha-D-galactose = a 1,2-diacyl-3-O-[alpha-D-galactosyl-(1-&gt;6)-beta-D-galactosyl]-sn-glycerol + UDP + H(+). In terms of biological role, involved in the synthesis of diacylglycerol galactolipids that are specifically found in thylakoid and in nodule peribacteroid membranes. Specific for alpha-glycosidic linkages. The protein is Digalactosyldiacylglycerol synthase 1, chloroplastic of Lotus japonicus (Lotus corniculatus var. japonicus).